Here is a 180-residue protein sequence, read N- to C-terminus: O-acetyl-ADP-ribose deacetylase (180 aa).

The Macro domain occupies 1 to 175; it reads MSGRINVVQG…LYQRLLGQYD (175 aa). Substrate contacts are provided by residues 11–12, Asn25, 33–35, and 122–126; these read DI, GVD, and STGIY. The active-site Proton acceptor is the Asp35.

The protein belongs to the MacroD-type family. YmdB subfamily. As to quaternary structure, homodimer. Interacts with RNase III.

The enzyme catalyses 3''-O-acetyl-ADP-D-ribose + H2O = ADP-D-ribose + acetate + H(+). The catalysed reaction is 2''-O-acetyl-ADP-D-ribose + H2O = ADP-D-ribose + acetate + H(+). Its function is as follows. Deacetylates O-acetyl-ADP ribose to yield ADP-ribose and free acetate. Down-regulates ribonuclease 3 (RNase III) activity. Acts by interacting directly with the region of the ribonuclease that is required for dimerization/activation. This is O-acetyl-ADP-ribose deacetylase from Cronobacter sakazakii (strain ATCC BAA-894) (Enterobacter sakazakii).